The following is a 379-amino-acid chain: Queuine tRNA-ribosyltransferase (379 aa).

Residue aspartate 94 is the Proton acceptor of the active site. Residues 94 to 98 (DSGGF), aspartate 148, glutamine 191, and glycine 218 contribute to the substrate site. Positions 249–255 (GVGSPDS) are RNA binding. Catalysis depends on aspartate 268, which acts as the Nucleophile. Positions 273–277 (TRIAR) are RNA binding; important for wobble base 34 recognition. Cysteine 306, cysteine 308, cysteine 311, and histidine 337 together coordinate Zn(2+).

The protein belongs to the queuine tRNA-ribosyltransferase family. Homodimer. Within each dimer, one monomer is responsible for RNA recognition and catalysis, while the other monomer binds to the replacement base PreQ1. It depends on Zn(2+) as a cofactor.

The enzyme catalyses 7-aminomethyl-7-carbaguanine + guanosine(34) in tRNA = 7-aminomethyl-7-carbaguanosine(34) in tRNA + guanine. Its pathway is tRNA modification; tRNA-queuosine biosynthesis. Catalyzes the base-exchange of a guanine (G) residue with the queuine precursor 7-aminomethyl-7-deazaguanine (PreQ1) at position 34 (anticodon wobble position) in tRNAs with GU(N) anticodons (tRNA-Asp, -Asn, -His and -Tyr). Catalysis occurs through a double-displacement mechanism. The nucleophile active site attacks the C1' of nucleotide 34 to detach the guanine base from the RNA, forming a covalent enzyme-RNA intermediate. The proton acceptor active site deprotonates the incoming PreQ1, allowing a nucleophilic attack on the C1' of the ribose to form the product. After dissociation, two additional enzymatic reactions on the tRNA convert PreQ1 to queuine (Q), resulting in the hypermodified nucleoside queuosine (7-(((4,5-cis-dihydroxy-2-cyclopenten-1-yl)amino)methyl)-7-deazaguanosine). The chain is Queuine tRNA-ribosyltransferase from Listeria monocytogenes serotype 4a (strain HCC23).